Consider the following 151-residue polypeptide: SsrA-binding protein (151 aa).

The protein belongs to the SmpB family.

The protein localises to the cytoplasm. Functionally, required for rescue of stalled ribosomes mediated by trans-translation. Binds to transfer-messenger RNA (tmRNA), required for stable association of tmRNA with ribosomes. tmRNA and SmpB together mimic tRNA shape, replacing the anticodon stem-loop with SmpB. tmRNA is encoded by the ssrA gene; the 2 termini fold to resemble tRNA(Ala) and it encodes a 'tag peptide', a short internal open reading frame. During trans-translation Ala-aminoacylated tmRNA acts like a tRNA, entering the A-site of stalled ribosomes, displacing the stalled mRNA. The ribosome then switches to translate the ORF on the tmRNA; the nascent peptide is terminated with the 'tag peptide' encoded by the tmRNA and targeted for degradation. The ribosome is freed to recommence translation, which seems to be the essential function of trans-translation. The chain is SsrA-binding protein from Campylobacter concisus (strain 13826).